The following is a 57-amino-acid chain: uncharacterized protein (57 aa).

The helical transmembrane segment at proline 3 to leucine 23 threads the bilayer. The tract at residues lysine 38–threonine 57 is disordered.

It localises to the host membrane. This is an uncharacterized protein from Acidianus bottle-shaped virus (isolate Italy/Pozzuoli) (ABV).